A 255-amino-acid chain; its full sequence is Tail completion protein p143 (255 aa).

It localises to the virion. In terms of biological role, putative role in tail stability. This is Tail completion protein p143 from Escherichia phage T5 (Enterobacteria phage T5).